A 228-amino-acid polypeptide reads, in one-letter code: Large ribosomal subunit protein bL25 (228 aa).

The interval 196–228 (EEAAVAEAQSAESAEGKAEAEAEATNEKNKSEA) is disordered. Positions 209–228 (AEGKAEAEAEATNEKNKSEA) are enriched in basic and acidic residues.

It belongs to the bacterial ribosomal protein bL25 family. CTC subfamily. As to quaternary structure, part of the 50S ribosomal subunit; part of the 5S rRNA/L5/L18/L25 subcomplex. Contacts the 5S rRNA. Binds to the 5S rRNA independently of L5 and L18.

Functionally, this is one of the proteins that binds to the 5S RNA in the ribosome where it forms part of the central protuberance. This is Large ribosomal subunit protein bL25 from Methylorubrum extorquens (strain CM4 / NCIMB 13688) (Methylobacterium extorquens).